Here is a 280-residue protein sequence, read N- to C-terminus: Putative pyruvate, phosphate dikinase regulatory protein (280 aa).

156-163 (GVSRTSKT) is an ADP binding site.

This sequence belongs to the pyruvate, phosphate/water dikinase regulatory protein family. PDRP subfamily.

The enzyme catalyses N(tele)-phospho-L-histidyl/L-threonyl-[pyruvate, phosphate dikinase] + ADP = N(tele)-phospho-L-histidyl/O-phospho-L-threonyl-[pyruvate, phosphate dikinase] + AMP + H(+). It carries out the reaction N(tele)-phospho-L-histidyl/O-phospho-L-threonyl-[pyruvate, phosphate dikinase] + phosphate + H(+) = N(tele)-phospho-L-histidyl/L-threonyl-[pyruvate, phosphate dikinase] + diphosphate. In terms of biological role, bifunctional serine/threonine kinase and phosphorylase involved in the regulation of the pyruvate, phosphate dikinase (PPDK) by catalyzing its phosphorylation/dephosphorylation. This Hyphomonas neptunium (strain ATCC 15444) protein is Putative pyruvate, phosphate dikinase regulatory protein.